The sequence spans 1066 residues: MPVFHTRTIESILEPVAQQISHLVIMHEEGEVDGKAIPDLTAPVAAVQAAVSNLVRVGKETVQTTEDQILKRDMPPAFIKVENACTKLVQAAQMLQSDPYSVPARDYLIDGSRGILSGTSDLLLTFDEAEVRKIIRVCKGILEYLTVAEVVETMEDLVTYTKNLGPGMTKMAKMIDERQQELTHQEHRVMLVNSMNTVKELLPVLISAMKIFVTTKNSKNQGIEEALKNRNFTVEKMSAEINEIIRVLQLTSWDEDAWASKDTEAMKRALASIDSKLNQAKGWLRDPNASPGDAGEQAIRQILDEAGKVGELCAGKERREILGTCKMLGQMTDQVADLRARGQGASPVAMQKAQQVSQGLDVLTAKVENAARKLEAMTNSKQSIAKKIDAAQNWLADPNGGPEGEEQIRGALAEARKIAELCDDPKERDDILRSLGEIAALTSKLGDLRRQGKGDSPEARALAKQVATALQNLQTKTNRAVANSRPAKAAVHLEGKIEQAQRWIDNPTVDDRGVGQAAIRGLVAEGHRLANVMMGPYRQDLLAKCDRVDQLTAQLADLAARGEGESPQARALASQLQDSLKDLKAQMQEAMTQEVSDVFSDTTTPIKLLAVAATAPPDAPNREEVFDERAANFENHSGRLGATAEKAAAVGTANKSTVEGIQASVKTARELTPQVISAARILLRNPGNQAAYEHFETMKNQWIDNVEKMTGLVDEAIDTKSLLDASEEAIKKDLDKCKVAMANIQPQMLVAGATSIARRANRILLVAKREVENSEDPKFREAVKAASDELSKTISPMVMDAKAVAGNISDPGLQKSFLDSGYRILGAVAKVREAFQPQEPDFPPPPPDLEQLRLTDELAPPKPPLPEGEVPPPRPPPPEEKDEEFPEQKAGEVINQPMMMAARQLHDEARKWSSKGNDIIAAAKRMALLMAEMSRLVRGGSGTKRALIQCAKDIAKASDEVTRLAKEVAKQCTDKRIRTNLLQVCERIPTISTQLKILSTVKATMLGRTNISDEESEQATEMLVHNAQNLMQSVKETVREAEAASIKIRTDAGFTLRWVRKTPWYQ.

Positions methionine 1–phenylalanine 835 are N-terminal globular head. Serine 97 carries the phosphoserine modification. The tract at residues methionine 168–alanine 208 is talin-interaction. Lysine 173 carries the post-translational modification N6-acetyllysine. 3 repeat units span residues alanine 259–asparagine 369, alanine 370–arginine 479, and alanine 480–glutamate 589. The 3 X 112 AA tandem repeats stretch occupies residues alanine 259–glutamate 589. A phosphoserine mark is found at serine 260, serine 272, serine 275, serine 290, serine 346, and serine 434. Lysine 496 carries the N6-acetyllysine modification. At tyrosine 537 the chain carries Phosphotyrosine. A phosphoserine mark is found at serine 574, serine 579, and serine 600. Residues threonine 604 and threonine 672 each carry the phosphothreonine modification. Position 721 is a phosphoserine (serine 721). Positions methionine 741 to leucine 764 are interaction with ACTN4. 2 positions are modified to phosphoserine: serine 795 and serine 809. Tyrosine 822 carries the phosphotyrosine modification. The segment at glutamine 836–proline 878 is linker (Pro-rich). A disordered region spans residues glutamate 857–glutamate 887. The span at proline 860–proline 876 shows a compositional bias: pro residues. A C-terminal tail region spans residues glutamate 879 to glutamine 1066. 2 facilitates phospholipid membrane insertion regions span residues arginine 935–arginine 978 and alanine 1052–glutamine 1066. The residue at position 1065 (tyrosine 1065) is a Phosphotyrosine; by SRC-type Tyr-kinases.

Belongs to the vinculin/alpha-catenin family. In terms of assembly, exhibits self-association properties. Part of a complex composed of THSD1, PTK2/FAK1, TLN1 and VCL. Interacts with APBB1IP, NRAP and TLN1. Interacts with SYNM. Interacts with CTNNB1 and this interaction is necessary for its localization to the cell-cell junctions and for its function in regulating cell surface expression of E-cadherin. Interacts with SORBS1. Interacts with SYNM. Interacts with CTNNA1. Binds to ACTN4; this interaction triggers conformational changes. Interacts with FLII. Post-translationally, phosphorylated; on serines, threonines and tyrosines. Phosphorylation on Tyr-1065 in activated platelets affects head-tail interactions and cell spreading but has no effect on actin binding nor on localization to focal adhesion plaques. Acetylated; mainly by myristic acid but also by a small amount of palmitic acid.

It localises to the cell membrane. It is found in the cell junction. The protein localises to the adherens junction. The protein resides in the focal adhesion. Its subcellular location is the cytoplasm. It localises to the cytoskeleton. It is found in the sarcolemma. The protein localises to the cell projection. The protein resides in the podosome. Actin filament (F-actin)-binding protein involved in cell-matrix adhesion and cell-cell adhesion. Regulates cell-surface E-cadherin expression and potentiates mechanosensing by the E-cadherin complex. May also play important roles in cell morphology and locomotion. The polypeptide is Vinculin (Vcl) (Mus musculus (Mouse)).